A 154-amino-acid polypeptide reads, in one-letter code: Small heat shock protein IbpB (154 aa).

The region spanning 26–137 is the sHSP domain; it reads GQEPQGFPPY…QPQRIAIGSA (112 aa).

This sequence belongs to the small heat shock protein (HSP20) family. Homodimer. Forms homomultimers of about 100-150 subunits at optimal growth temperatures. Conformation changes to oligomers at high temperatures or high ionic concentrations. The decrease in size of the multimers is accompanied by an increase in chaperone activity.

The protein localises to the cytoplasm. In terms of biological role, associates with aggregated proteins, together with IbpA, to stabilize and protect them from irreversible denaturation and extensive proteolysis during heat shock and oxidative stress. Aggregated proteins bound to the IbpAB complex are more efficiently refolded and reactivated by the ATP-dependent chaperone systems ClpB and DnaK/DnaJ/GrpE. Its activity is ATP-independent. The protein is Small heat shock protein IbpB of Yersinia pseudotuberculosis serotype O:1b (strain IP 31758).